The following is a 270-amino-acid chain: Undecaprenyl-diphosphatase 3 (270 aa).

The next 7 helical transmembrane spans lie at Tyr5 to Ile25, Ile42 to Ile62, Phe89 to Phe109, Leu117 to Ile137, Phe192 to Ile212, Thr220 to Leu240, and Gly250 to Leu270.

It belongs to the UppP family.

It is found in the cell membrane. It carries out the reaction di-trans,octa-cis-undecaprenyl diphosphate + H2O = di-trans,octa-cis-undecaprenyl phosphate + phosphate + H(+). Catalyzes the dephosphorylation of undecaprenyl diphosphate (UPP). Confers resistance to bacitracin. The chain is Undecaprenyl-diphosphatase 3 from Bacillus anthracis.